The following is a 693-amino-acid chain: Glycine--tRNA ligase beta subunit (693 aa).

Basic and acidic residues predominate over residues 65–74 (QPDKSVEKRG). Residues 65 to 84 (QPDKSVEKRGPAVKAAFDDS) form a disordered region.

It belongs to the class-II aminoacyl-tRNA synthetase family. Tetramer of two alpha and two beta subunits.

It is found in the cytoplasm. It catalyses the reaction tRNA(Gly) + glycine + ATP = glycyl-tRNA(Gly) + AMP + diphosphate. In Marinobacter nauticus (strain ATCC 700491 / DSM 11845 / VT8) (Marinobacter aquaeolei), this protein is Glycine--tRNA ligase beta subunit.